We begin with the raw amino-acid sequence, 678 residues long: Zinc finger translocation-associated protein (678 aa).

4 disordered regions span residues 1–100, 174–250, 333–413, and 493–583; these read MEPG…PGRD, GAGG…GSRG, LSEL…RDHR, and PESP…NYQP. A compositionally biased stretch (low complexity) spans 66-78; it reads PSSRARGPASSGR. Residues 79 to 88 are compositionally biased toward basic and acidic residues; the sequence is KYSDHCEARA. Over residues 187–200 the composition is skewed to acidic residues; that stretch reads AEEEEEEDEEEEEG. The segment covering 205–214 has biased composition (low complexity); sequence ACPPKGSGKA. Residue Lys-375 forms a Glycyl lysine isopeptide (Lys-Gly) (interchain with G-Cter in SUMO2) linkage. Over residues 493–509 the composition is skewed to low complexity; sequence PESPSVPVAPSTASASE. Composition is skewed to acidic residues over residues 512–524 and 539–549; these read GGAE…EEWW and AEEEDDEDDSQ. The span at 557-572 shows a compositional bias: pro residues; it reads PPLPLPPPPPPPPPPP. Positions 573 to 583 are enriched in basic and acidic residues; that stretch reads RSREQRRNYQP.

The chain is Zinc finger translocation-associated protein from Mus musculus (Mouse).